We begin with the raw amino-acid sequence, 378 residues long: Acetylornithine deacetylase (378 aa).

A Zn(2+)-binding site is contributed by histidine 76. Residue aspartate 78 is part of the active site. A Zn(2+)-binding site is contributed by aspartate 108. Residue glutamate 140 is part of the active site. Zn(2+) contacts are provided by glutamate 141, glutamate 165, and histidine 351.

It belongs to the peptidase M20A family. ArgE subfamily. As to quaternary structure, homodimer. Requires Zn(2+) as cofactor. The cofactor is Co(2+). Glutathione serves as cofactor.

The protein resides in the cytoplasm. It catalyses the reaction N(2)-acetyl-L-ornithine + H2O = L-ornithine + acetate. The protein operates within amino-acid biosynthesis; L-arginine biosynthesis; L-ornithine from N(2)-acetyl-L-ornithine (linear): step 1/1. Catalyzes the hydrolysis of the amide bond of N(2)-acetylated L-amino acids. Cleaves the acetyl group from N-acetyl-L-ornithine to form L-ornithine, an intermediate in L-arginine biosynthesis pathway, and a branchpoint in the synthesis of polyamines. In Vibrio campbellii (strain ATCC BAA-1116), this protein is Acetylornithine deacetylase.